Consider the following 394-residue polypeptide: Phosphopentomutase (394 aa).

Residues aspartate 13, aspartate 286, histidine 291, aspartate 327, histidine 328, and histidine 339 each coordinate Mn(2+).

This sequence belongs to the phosphopentomutase family. Mn(2+) serves as cofactor.

The protein localises to the cytoplasm. The enzyme catalyses 2-deoxy-alpha-D-ribose 1-phosphate = 2-deoxy-D-ribose 5-phosphate. It carries out the reaction alpha-D-ribose 1-phosphate = D-ribose 5-phosphate. It functions in the pathway carbohydrate degradation; 2-deoxy-D-ribose 1-phosphate degradation; D-glyceraldehyde 3-phosphate and acetaldehyde from 2-deoxy-alpha-D-ribose 1-phosphate: step 1/2. Isomerase that catalyzes the conversion of deoxy-ribose 1-phosphate (dRib-1-P) and ribose 1-phosphate (Rib-1-P) to deoxy-ribose 5-phosphate (dRib-5-P) and ribose 5-phosphate (Rib-5-P), respectively. The chain is Phosphopentomutase from Bacillus cereus (strain B4264).